Here is a 406-residue protein sequence, read N- to C-terminus: MTTPANAQNASKTWELSLYELHRTPQEAIMDGTEIAVSPRSLHSELMCPICLDMLKNTMTTKECLHRFCSDCIVTALRSGNKECPTCRKKLVSKRSLRPDPNFDALISKIYPSREEYEAHQDRVLIRLSRLHNQQALSSSIEEGLRMQAMHRAQRVRRPMPGSDQTTTMSGGEGEPGEGEGDGEDISSDSAPDSAPGPAPKRPRGGGAGGSSVGTGGGAAGGACGGAGSEDSGDRGGTLGGGTLGPPSPPGAPSPPEPGGEIELVFRPHPLLVEKGEYCQTRYVKTTGNATVDHLSKYLALRIALERRQQQETVEPGGPGGGASDTGGPDGGGGERGVSGGGEGPEEPALPSLEGVSEKQYTIYIAPGGGAFTTLNGSLTLELVNEKFWKVSRPLELCYAPTKDPK.

Thr-24 is subject to Phosphothreonine. A necessary for transcriptional repression region spans residues 30–234 (MDGTEIAVSP…GGAGSEDSGD (205 aa)). Ser-38 carries the phosphoserine modification. Residues 48-88 (CPICLDMLKNTMTTKECLHRFCSDCIVTALRSGNKECPTCR) form an RING-type zinc finger. Phosphoserine is present on residues Ser-140, Ser-187, and Ser-190. 2 disordered regions span residues 151-263 (HRAQ…GEIE) and 309-354 (QQQE…PSLE). Over residues 175-187 (EPGEGEGDGEDIS) the composition is skewed to acidic residues. Residues 201–204 (KRPR) carry the Nuclear localization signal motif. Gly residues predominate over residues 205-228 (GGGAGGSSVGTGGGAAGGACGGAG). Thr-215 carries the post-translational modification Phosphothreonine. Phosphoserine is present on residues Ser-229 and Ser-232. A necessary for interaction with CBX2 region spans residues 230–406 (EDSGDRGGTL…LCYAPTKDPK (177 aa)). Residues 235–244 (RGGTLGGGTL) are compositionally biased toward gly residues. Residues 246-258 (PPSPPGAPSPPEP) are compositionally biased toward pro residues. Ser-248 and Ser-254 each carry phosphoserine. Gly residues predominate over residues 317–343 (GGPGGGASDTGGPDGGGGERGVSGGGE).

In terms of assembly, component of chromatin-associated Polycomb (PcG) complexes. Part of the E2F6.com-1 complex in G0 phase composed of E2F6, MGA, MAX, TFDP1, CBX3, BAT8, EUHMTASE1, RING1, RNF2/RING2 MBLR, L3MBTL2 and YAF2. Interacts with CBX2 and PCGF6. Component of a PRC1-like complex. Component of repressive BCOR complex containing Polycomb group subcomplex at least composed of RYBP, PCGF1, BCOR and RNF2/RING2. Interacts with BMI1, PHC2, PCGF2, RNF2; CBX6, CBX7 and CBX8. Interacts with MN1. Interacts with USP26.

Its subcellular location is the nucleus speckle. It carries out the reaction S-ubiquitinyl-[E2 ubiquitin-conjugating enzyme]-L-cysteine + [acceptor protein]-L-lysine = [E2 ubiquitin-conjugating enzyme]-L-cysteine + N(6)-ubiquitinyl-[acceptor protein]-L-lysine.. It participates in protein modification; protein ubiquitination. In terms of biological role, constitutes one of the E3 ubiquitin-protein ligases that mediate monoubiquitination of 'Lys-119' of histone H2A, thereby playing a central role in histone code and gene regulation. H2A 'Lys-119' ubiquitination gives a specific tag for epigenetic transcriptional repression and participates in X chromosome inactivation of female mammals. Essential component of a Polycomb group (PcG) multiprotein PRC1-like complex, a complex class required to maintain the transcriptionally repressive state of many genes, including Hox genes, throughout development. PcG PRC1 complex acts via chromatin remodeling and modification of histones, rendering chromatin heritably changed in its expressibility. Compared to RNF2/RING2, it does not have the main E3 ubiquitin ligase activity on histone H2A, and it may rather act as a modulator of RNF2/RING2 activity. This Rattus norvegicus (Rat) protein is E3 ubiquitin-protein ligase RING1.